The sequence spans 496 residues: E3 ubiquitin-protein ligase CBL-C (496 aa).

Positions 7-144 (PRGWQRGEPR…SALFPAGKYC (138 aa)) are 4H. In terms of domain architecture, Cbl-PTB spans 7 to 320 (PRGWQRGEPR…GKKHNPDLTE (314 aa)). The EF-hand-like stretch occupies residues 145–217 (GHLYQLTKGS…FEFDVFTRLF (73 aa)). Aspartate 198, threonine 200, asparagine 202, and glutamate 209 together coordinate Ca(2+). An SH2-like region spans residues 218-320 (QPWPTLLRNW…GKKHNPDLTE (103 aa)). 4-O-phospho-L-tyrosine is bound at residue arginine 263. Positions 321–349 (LCRVEPYQRIQVSEEQLLLYQAMNSTFQL) are linker. Phosphotyrosine; by SRC is present on tyrosine 340. The RING-type zinc finger occupies 350–389 (CKICAERDKDVRIEPCGHLLCSCCLAAWQDSDSQTCPFCR). Positions 350 to 494 (CKICAERDKD…RPRAREEATE (145 aa)) are interaction with RET. A disordered region spans residues 432-453 (PVIPSAPSLLPEDQFPQGPQDK).

As to quaternary structure, interacts with Ubiquitin-conjugating enzyme E2 UBE2D2 and UBE2D3. Isoform 1 interacts with EGFR (tyrosine phosphorylated). Interacts with the SH3 domain proteins LYN and CRK. Interacts (via RING-type zinc finger) with TGFB1I1 (via LIM zinc-binding domain 2); the interaction is direct and enhances the E3 activity. Interacts directly with RET (inactive) and CD2AP; dissociates from RET upon RET activation by GDNF which also increases the interaction with CD2AP suggesting dissociation as CBLC:CD2AP complex. Interacts with SRC; the interaction is enhanced when SRC is phosphorylated at 'Tyr-419'. Post-translationally, phosphorylated on tyrosines by EGFR. Phosphorylated on multiple tyrosine residues by SRC. Isoform 1, but not isoform 2, is phosphorylated on tyrosines by EGFR. In terms of processing, autoubiquitinated, when phosphorylated at Tyr-340. In terms of tissue distribution, widely expressed in tissues, where the expression is restricted to epithelial cells (at protein level).

It catalyses the reaction S-ubiquitinyl-[E2 ubiquitin-conjugating enzyme]-L-cysteine + [acceptor protein]-L-lysine = [E2 ubiquitin-conjugating enzyme]-L-cysteine + N(6)-ubiquitinyl-[acceptor protein]-L-lysine.. With respect to regulation, phosphorylation at Tyr-340 is necessary and sufficient for the activation of E3 activity. Functionally, acts as an E3 ubiquitin-protein ligase, which accepts ubiquitin from specific E2 ubiquitin-conjugating enzymes, and then transfers it to substrates promoting their degradation by the proteasome. Functionally coupled with the E2 ubiquitin-protein ligases UB2D1, UB2D2 and UB2D3. Regulator of EGFR mediated signal transduction; upon EGF activation, ubiquitinates EGFR. Isoform 1, but not isoform 2, inhibits EGF stimulated MAPK1 activation. Promotes ubiquitination of SRC phosphorylated at 'Tyr-424', has the highest ubiquitin ligase activity among CBL family proteins. In collaboration with CD2AP may act as regulatory checkpoint for Ret signaling by modulating the rate of RET degradation after ligand activation; CD2AP converts it from an inhibitor to a promoter of RET degradation; the function limits the potency of GDNF on neuronal survival. The protein is E3 ubiquitin-protein ligase CBL-C (Cblc) of Mus musculus (Mouse).